Here is a 449-residue protein sequence, read N- to C-terminus: Chromogranin-A (449 aa).

The first 18 residues, 1-18, serve as a signal peptide directing secretion; it reads MRSAAVLALLLCAGQVIA. An intrachain disulfide couples Cys-35 to Cys-56. A disordered region spans residues 87–431; that stretch reads AKERTHQQKK…EDQELESLSA (345 aa). Ser-99 carries the phosphoserine modification. Residues 107-140 show a composition bias toward basic and acidic residues; it reads VLEKPNDQAEPKEVTEEVSSKDAAEKRDDFKEVE. Ser-142 is modified (phosphoserine). The O-linked (GalNAc...) serine glycan is linked to Ser-185. Tyr-191 carries the post-translational modification Phosphotyrosine. Residue Ser-200 is modified to Phosphoserine. Ser-204 is a glycosylation site (O-linked (GalNAc...) serine). The residue at position 215 (Ser-215) is a Phosphoserine. Residues 233–242 are compositionally biased toward basic and acidic residues; sequence EAEAREKAVP. O-linked (GalNAc...) threonine glycosylation is present at Thr-249. Over residues 279–297 the composition is skewed to basic and acidic residues; sequence GAEEAKPPEGKGEWAHSRQ. Phosphoserine is present on Ser-295. A Glycine amide modification is found at Gly-312. 3 positions are modified to phosphoserine: Ser-315, Ser-325, and Ser-363. A compositionally biased stretch (basic and acidic residues) spans 323 to 351; the sequence is QLSKEWEDAKRWSKMDQLAKELTAEKRLE. At Met-364 the chain carries Methionine sulfoxide. 4 positions are modified to phosphoserine: Ser-390, Ser-394, Ser-416, and Ser-430. The segment covering 406–423 has biased composition (basic and acidic residues); that stretch reads YPEEKKEEEGSANRRPED. Ser-416 is a glycosylation site (O-linked (Xyl...) (chondroitin sulfate) serine).

The protein belongs to the chromogranin/secretogranin protein family. In terms of assembly, self-interacts; self-assembly is promoted in vitro by chondroitin sulfate attachment which occurs at mildly acidic pH conditions. Interacts with SCG3. Interacts with ITPR1 in the secretory granules. In secretory granules, is attacked at both N- and C-terminal sides by proteolytic enzymes generating numerous peptides of various activities. Proteolytic processing can give rise to additional longer forms of catestatin peptides which display a less potent catecholamine release-inhibitory activity. In terms of processing, O-glycosylated; contains chondroitin sulfate (CS). CS attachment is pH-dependent, being observed at mildly acidic conditions of pH 5 but not at neutral pH, and promotes self-assembly in vitro. As to expression, highest concentration of GE-25 found in adrenal medulla with lower levels present in the pituitary, the intestinal mucosa and the pancreas. Also found in the brain.

The protein resides in the secreted. The protein localises to the cytoplasmic vesicle. It localises to the secretory vesicle. Its subcellular location is the neuronal dense core vesicle. Its function is as follows. Strongly inhibits glucose induced insulin release from the pancreas. Functionally, completely inhibits catecholamine release from chromaffin cells. In terms of biological role, has antibacterial activity against M.luteus. Not active against E.coli. Inhibits catecholamine release from chromaffin cells and noradrenergic neurons by acting as a non-competitive nicotinic cholinergic antagonist. Displays antibacterial activity against Gram-positive bacteria M.luteus and B.megaterium, and Gram-negative bacteria E.coli, and antifungal activity against a variety of filamentous fungi including A.fumigatus, N.hematococca, F.culmorum, F.oxyporum, T.mentagrophytes and several forms of Candida: C.albicans, C.tropicalis, C.glabrata and C.neoform. Can induce mast cell migration, degranulation and production of cytokines and chemokines. Its function is as follows. Has antibacterial activity against Gram-positive bacteria M.luteus, B.megaterium. Not active against Gram-positive bacteria B.cereus, B.subtilis, S.pyogenes, M.fortuitum, S.aureus and L.monocytogenes and against Gram-negative bacteria E.coli, E.cloacae, S.typhimurium, K.pneumoniae and P.aeruginosa. Possesses antifungal activity against N.crassa, A.fumigatus, A.brassicicola, N.hematococca, F.culmorum and F.oxyporum and against the yeast S.cerevisiae and C.albicans. Inactive against A.benhamiae. Functionally, has antifungal activity against N.crassa, A.fumigatus, A.brassicicola, N.hematococca, F.culmorum, F.oxyporum, A.benhamiae, C.neoformans, as well as against yeasts C.albicans, and C.tropicalis. Seems to be inactive against C.glabrata. Interacts with the fungal cell wall, crosses the plasma membrane and accumulates in fungal cells where it inhibits calcineurin activity. In terms of biological role, regulates granule biogenesis in endocrine cells by up-regulating the transcription of protease nexin 1 (SERPINE2) via a cAMP-PKA-SP1 pathway. This leads to inhibition of granule protein degradation in the Golgi complex which in turn promotes granule formation. This chain is Chromogranin-A (CHGA), found in Bos taurus (Bovine).